The chain runs to 251 residues: MLAKRIVPCLDIKDGKTVKGINFVNFRDAGDPVELGAQYSREGADELVYLDITASHEGRKTFTELVKQVAAHISIPFTVGGGINELKDVDRLLSAGADKVSINSAALRNPALIEEIAKNFGSQVCVVAIDANFENNDWLCYLNGGRVPTDKYLFQWASEAESRGAGEILFTSMTHDGVKDGYANDALATLADTLHIPVIASGGAGKMEHFRDTFSNGKAGAALAASVFHFGEIRISDLKQYLKDEGINVRI.

Active-site residues include aspartate 11 and aspartate 130.

This sequence belongs to the HisA/HisF family. In terms of assembly, heterodimer of HisH and HisF.

Its subcellular location is the cytoplasm. It catalyses the reaction 5-[(5-phospho-1-deoxy-D-ribulos-1-ylimino)methylamino]-1-(5-phospho-beta-D-ribosyl)imidazole-4-carboxamide + L-glutamine = D-erythro-1-(imidazol-4-yl)glycerol 3-phosphate + 5-amino-1-(5-phospho-beta-D-ribosyl)imidazole-4-carboxamide + L-glutamate + H(+). Its pathway is amino-acid biosynthesis; L-histidine biosynthesis; L-histidine from 5-phospho-alpha-D-ribose 1-diphosphate: step 5/9. Its function is as follows. IGPS catalyzes the conversion of PRFAR and glutamine to IGP, AICAR and glutamate. The HisF subunit catalyzes the cyclization activity that produces IGP and AICAR from PRFAR using the ammonia provided by the HisH subunit. This chain is Imidazole glycerol phosphate synthase subunit HisF, found in Parabacteroides distasonis (strain ATCC 8503 / DSM 20701 / CIP 104284 / JCM 5825 / NCTC 11152).